Reading from the N-terminus, the 103-residue chain is UPF0058 protein MJ1205 (103 aa).

Belongs to the UPF0058 family.

The polypeptide is UPF0058 protein MJ1205 (Methanocaldococcus jannaschii (strain ATCC 43067 / DSM 2661 / JAL-1 / JCM 10045 / NBRC 100440) (Methanococcus jannaschii)).